The chain runs to 294 residues: Lipoyl synthase (294 aa).

[4Fe-4S] cluster contacts are provided by cysteine 35, cysteine 40, cysteine 46, cysteine 61, cysteine 65, cysteine 68, and serine 275. The Radical SAM core domain occupies 46 to 264 (CWGGGTATVM…REAGLGLGFR (219 aa)).

This sequence belongs to the radical SAM superfamily. Lipoyl synthase family. The cofactor is [4Fe-4S] cluster.

Its subcellular location is the cytoplasm. It catalyses the reaction [[Fe-S] cluster scaffold protein carrying a second [4Fe-4S](2+) cluster] + N(6)-octanoyl-L-lysyl-[protein] + 2 oxidized [2Fe-2S]-[ferredoxin] + 2 S-adenosyl-L-methionine + 4 H(+) = [[Fe-S] cluster scaffold protein] + N(6)-[(R)-dihydrolipoyl]-L-lysyl-[protein] + 4 Fe(3+) + 2 hydrogen sulfide + 2 5'-deoxyadenosine + 2 L-methionine + 2 reduced [2Fe-2S]-[ferredoxin]. It participates in protein modification; protein lipoylation via endogenous pathway; protein N(6)-(lipoyl)lysine from octanoyl-[acyl-carrier-protein]: step 2/2. In terms of biological role, catalyzes the radical-mediated insertion of two sulfur atoms into the C-6 and C-8 positions of the octanoyl moiety bound to the lipoyl domains of lipoate-dependent enzymes, thereby converting the octanoylated domains into lipoylated derivatives. The protein is Lipoyl synthase of Anaeromyxobacter sp. (strain Fw109-5).